A 302-amino-acid polypeptide reads, in one-letter code: F-box protein SKIP19 (302 aa).

An F-box domain is found at 16-63 (STNWTELPPELTSAILHRLGAIEILENAQKVCRSWRRVCKDPSMWRKI).

As to quaternary structure, part of a SCF (ASK-cullin-F-box) protein ligase complex. Interacts with CUL1 and SPK1B/ASK2.

It localises to the nucleus. The protein operates within protein modification; protein ubiquitination. Functionally, component of SCF(ASK-cullin-F-box) E3 ubiquitin ligase complexes, which may mediate the ubiquitination and subsequent proteasomal degradation of target proteins. The protein is F-box protein SKIP19 (SKIP19) of Arabidopsis thaliana (Mouse-ear cress).